The sequence spans 316 residues: 4-hydroxy-3-methylbut-2-enyl diphosphate reductase (316 aa).

C12 lines the [4Fe-4S] cluster pocket. (2E)-4-hydroxy-3-methylbut-2-enyl diphosphate contacts are provided by H41 and H74. The dimethylallyl diphosphate site is built by H41 and H74. Isopentenyl diphosphate-binding residues include H41 and H74. C96 contributes to the [4Fe-4S] cluster binding site. (2E)-4-hydroxy-3-methylbut-2-enyl diphosphate is bound at residue H124. H124 is a binding site for dimethylallyl diphosphate. H124 contacts isopentenyl diphosphate. The active-site Proton donor is E126. Position 168 (T168) interacts with (2E)-4-hydroxy-3-methylbut-2-enyl diphosphate. Residue C198 participates in [4Fe-4S] cluster binding. Residues S226, S227, N228, and S270 each contribute to the (2E)-4-hydroxy-3-methylbut-2-enyl diphosphate site. Residues S226, S227, N228, and S270 each contribute to the dimethylallyl diphosphate site. Isopentenyl diphosphate-binding residues include S226, S227, N228, and S270.

Belongs to the IspH family. Requires [4Fe-4S] cluster as cofactor.

It carries out the reaction isopentenyl diphosphate + 2 oxidized [2Fe-2S]-[ferredoxin] + H2O = (2E)-4-hydroxy-3-methylbut-2-enyl diphosphate + 2 reduced [2Fe-2S]-[ferredoxin] + 2 H(+). The enzyme catalyses dimethylallyl diphosphate + 2 oxidized [2Fe-2S]-[ferredoxin] + H2O = (2E)-4-hydroxy-3-methylbut-2-enyl diphosphate + 2 reduced [2Fe-2S]-[ferredoxin] + 2 H(+). It participates in isoprenoid biosynthesis; dimethylallyl diphosphate biosynthesis; dimethylallyl diphosphate from (2E)-4-hydroxy-3-methylbutenyl diphosphate: step 1/1. It functions in the pathway isoprenoid biosynthesis; isopentenyl diphosphate biosynthesis via DXP pathway; isopentenyl diphosphate from 1-deoxy-D-xylulose 5-phosphate: step 6/6. In terms of biological role, catalyzes the conversion of 1-hydroxy-2-methyl-2-(E)-butenyl 4-diphosphate (HMBPP) into a mixture of isopentenyl diphosphate (IPP) and dimethylallyl diphosphate (DMAPP). Acts in the terminal step of the DOXP/MEP pathway for isoprenoid precursor biosynthesis. This is 4-hydroxy-3-methylbut-2-enyl diphosphate reductase from Acinetobacter baylyi (strain ATCC 33305 / BD413 / ADP1).